Reading from the N-terminus, the 103-residue chain is Small ribosomal subunit protein uS10 (103 aa).

This sequence belongs to the universal ribosomal protein uS10 family. In terms of assembly, part of the 30S ribosomal subunit.

In terms of biological role, involved in the binding of tRNA to the ribosomes. The sequence is that of Small ribosomal subunit protein uS10 from Borrelia recurrentis (strain A1).